We begin with the raw amino-acid sequence, 46 residues long: Delta-actitoxin-Avd1d (46 aa).

Cystine bridges form between C4/C44, C6/C34, and C27/C45.

This sequence belongs to the sea anemone sodium channel inhibitory toxin family. Type I subfamily.

The protein localises to the secreted. It is found in the nematocyst. In terms of biological role, binds specifically to voltage-gated sodium channels (Nav), thereby delaying their inactivation during signal transduction. Thus it strongly stimulates mammalian cardiac muscle contraction. This Anemonia sulcata (Mediterranean snakelocks sea anemone) protein is Delta-actitoxin-Avd1d.